A 71-amino-acid polypeptide reads, in one-letter code: Palustrin-2AJ2 (71 aa).

The N-terminal stretch at 1–22 (MFTLKKPLLVLLFLGTVSLSLC) is a signal peptide. Positions 23–40 (EQERAADDDEGEVIEEEV) are excised as a propeptide. A disulfide bridge connects residues Cys-65 and Cys-71.

In terms of tissue distribution, expressed by the skin glands.

It localises to the secreted. In terms of biological role, displays broad-spectrum antibacterial activity against a range of Gram-positive and Gram-negative bacteria. Has low hemolytic activity, low cytotoxicity and low antioxidant activity. This Amolops jingdongensis (Chinese torrent frog) protein is Palustrin-2AJ2.